A 100-amino-acid polypeptide reads, in one-letter code: Cobalt transport protein CbiN (100 aa).

Transmembrane regions (helical) follow at residues 8-28 (LSNWLLIGGVIALAVLPLIFV) and 69-89 (LLFSSQAALGAGIIGYAVGLY).

This sequence belongs to the CbiN family. Forms an energy-coupling factor (ECF) transporter complex composed of an ATP-binding protein (A component, CbiO), a transmembrane protein (T component, CbiQ) and 2 possible substrate-capture proteins (S components, CbiM and CbiN) of unknown stoichimetry.

The protein localises to the cell inner membrane. It functions in the pathway cofactor biosynthesis; adenosylcobalamin biosynthesis. Functionally, part of the energy-coupling factor (ECF) transporter complex CbiMNOQ involved in cobalt import. In Nostoc sp. (strain PCC 7120 / SAG 25.82 / UTEX 2576), this protein is Cobalt transport protein CbiN.